Consider the following 192-residue polypeptide: Peptidyl-tRNA hydrolase (192 aa).

Residue Tyr-17 participates in tRNA binding. His-22 serves as the catalytic Proton acceptor. Residues Phe-67, Asn-69, and Asn-115 each contribute to the tRNA site.

Belongs to the PTH family. In terms of assembly, monomer.

The protein localises to the cytoplasm. It carries out the reaction an N-acyl-L-alpha-aminoacyl-tRNA + H2O = an N-acyl-L-amino acid + a tRNA + H(+). Functionally, hydrolyzes ribosome-free peptidyl-tRNAs (with 1 or more amino acids incorporated), which drop off the ribosome during protein synthesis, or as a result of ribosome stalling. Its function is as follows. Catalyzes the release of premature peptidyl moieties from peptidyl-tRNA molecules trapped in stalled 50S ribosomal subunits, and thus maintains levels of free tRNAs and 50S ribosomes. This chain is Peptidyl-tRNA hydrolase, found in Methylobacillus flagellatus (strain ATCC 51484 / DSM 6875 / VKM B-1610 / KT).